We begin with the raw amino-acid sequence, 105 residues long: Biogenesis of lysosome-related organelles complex 1 subunit SNN1 (105 aa).

Residues 70 to 105 are a coiled coil; it reads WKDDNERLDSLRKRVDSLKSRFQSLKLRSDKLEQRE.

The protein belongs to the SNAPIN family. In terms of assembly, component of the biogenesis of lysosome-related organelles complex-1 (BLOC-1).

It is found in the endosome. Component of the biogenesis of lysosome-related organelles complex-1 (BLOC-1), a complex involved in endosomal cargo sorting. The protein is Biogenesis of lysosome-related organelles complex 1 subunit SNN1 (SNN1) of Zygosaccharomyces rouxii (strain ATCC 2623 / CBS 732 / NBRC 1130 / NCYC 568 / NRRL Y-229).